The chain runs to 682 residues: Beta-galactosidase (682 aa).

An N-terminal signal peptide occupies residues 1-23 (MPGFLVRILPLLLPLLLLGPTRG). The propeptide occupies 24–28 (LRNAT). Asn26 is a glycosylation site (N-linked (GlcNAc...) asparagine). The substrate site is built by Tyr83, Glu129, and Asn187. The active-site Proton donor is Glu188. The cysteines at positions 195 and 230 are disulfide-linked. Asn247 is a glycosylation site (N-linked (GlcNAc...) asparagine). The Nucleophile role is filled by Glu268. Residue Tyr333 participates in substrate binding. N-linked (GlcNAc...) asparagine glycosylation is found at Asn464, Asn498, Asn545, and Asn555. The cysteines at positions 626 and 634 are disulfide-linked.

Belongs to the glycosyl hydrolase 35 family. As to quaternary structure, homodimer. May form higher multimers.

It is found in the lysosome. The catalysed reaction is Hydrolysis of terminal non-reducing beta-D-galactose residues in beta-D-galactosides.. Cleaves beta-linked terminal galactosyl residues from gangliosides, glycoproteins, and glycosaminoglycans. This is Beta-galactosidase (GLB1) from Macaca fascicularis (Crab-eating macaque).